Reading from the N-terminus, the 132-residue chain is Small ribosomal subunit protein uS8 (132 aa).

This sequence belongs to the universal ribosomal protein uS8 family. As to quaternary structure, part of the 30S ribosomal subunit. Contacts proteins S5 and S12.

One of the primary rRNA binding proteins, it binds directly to 16S rRNA central domain where it helps coordinate assembly of the platform of the 30S subunit. This is Small ribosomal subunit protein uS8 from Gluconacetobacter diazotrophicus (strain ATCC 49037 / DSM 5601 / CCUG 37298 / CIP 103539 / LMG 7603 / PAl5).